Here is a 123-residue protein sequence, read N- to C-terminus: RxLR effector protein Avh262 (123 aa).

The signal sequence occupies residues 1 to 18 (MLPVAVVLVVFAVAVTSA). The tract at residues 24 to 46 (VNPLPRRRRLKGTEEKGHHTNVN) is disordered. The short motif at 30-50 (RRRLKGTEEKGHHTNVNDEER) is the RxLR-dEER element. Over residues 34–46 (KGTEEKGHHTNVN) the composition is skewed to basic and acidic residues. A biP-binding region spans residues 60–82 (LISKLKVKINAKLLAGDSAKPAT).

This sequence belongs to the RxLR effector family. Interacts with host plant ER-luminal binding immunoglobulin proteins (BiPs) such as soybean BiP1, BiP2, BiP3 and BiP4.

It localises to the secreted. It is found in the host endoplasmic reticulum. In terms of biological role, effector that suppresses plant defense responses during the early stages of pathogen infection. Suppresses cell death induced by effectors and PAMPs in plant hosts. Avh262 stabilizes endoplasmic reticulum (ER)-luminal binding immunoglobulin proteins (BiPs), which act as negative regulators of plant resistance to Phytophthora. By stabilizing BiPs, Avh262 suppresses ER stress-triggered cell death and facilitates Phytophthora infection. The sequence is that of RxLR effector protein Avh262 from Phytophthora sojae (Soybean stem and root rot agent).